A 139-amino-acid chain; its full sequence is NADH-quinone oxidoreductase subunit A (139 aa).

Helical transmembrane passes span 16 to 36 (GLFIIAVFALCALMIGAASLL), 69 to 89 (LVAMLFVIFDIEAVFLFAWAV), and 94 to 114 (VGWEGFAGAAVFIFILLAGLV).

The protein belongs to the complex I subunit 3 family. In terms of assembly, NDH-1 is composed of 14 different subunits. Subunits NuoA, H, J, K, L, M, N constitute the membrane sector of the complex.

The protein localises to the cell inner membrane. The catalysed reaction is a quinone + NADH + 5 H(+)(in) = a quinol + NAD(+) + 4 H(+)(out). NDH-1 shuttles electrons from NADH, via FMN and iron-sulfur (Fe-S) centers, to quinones in the respiratory chain. The immediate electron acceptor for the enzyme in this species is believed to be ubiquinone. Couples the redox reaction to proton translocation (for every two electrons transferred, four hydrogen ions are translocated across the cytoplasmic membrane), and thus conserves the redox energy in a proton gradient. The sequence is that of NADH-quinone oxidoreductase subunit A from Chromohalobacter salexigens (strain ATCC BAA-138 / DSM 3043 / CIP 106854 / NCIMB 13768 / 1H11).